The sequence spans 173 residues: UPF0598 protein F59C6.12 (173 aa).

This sequence belongs to the UPF0598 family.

The protein is UPF0598 protein F59C6.12 of Caenorhabditis elegans.